Consider the following 412-residue polypeptide: Probable tRNA sulfurtransferase (412 aa).

The segment at 1–22 is disordered; sequence MPDIFTDNTDKQDSDPSRQGFE. Residues 82–190 enclose the THUMP domain; the sequence is PRAAEAAADV…QNLAYVYLET (109 aa). ATP-binding positions include 208 to 209, Lys-292, Gly-314, and Gln-323; that span reads LM.

Belongs to the ThiI family.

The protein resides in the cytoplasm. It catalyses the reaction [ThiI sulfur-carrier protein]-S-sulfanyl-L-cysteine + a uridine in tRNA + 2 reduced [2Fe-2S]-[ferredoxin] + ATP + H(+) = [ThiI sulfur-carrier protein]-L-cysteine + a 4-thiouridine in tRNA + 2 oxidized [2Fe-2S]-[ferredoxin] + AMP + diphosphate. It carries out the reaction [ThiS sulfur-carrier protein]-C-terminal Gly-Gly-AMP + S-sulfanyl-L-cysteinyl-[cysteine desulfurase] + AH2 = [ThiS sulfur-carrier protein]-C-terminal-Gly-aminoethanethioate + L-cysteinyl-[cysteine desulfurase] + A + AMP + 2 H(+). The protein operates within cofactor biosynthesis; thiamine diphosphate biosynthesis. Its function is as follows. Catalyzes the ATP-dependent transfer of a sulfur to tRNA to produce 4-thiouridine in position 8 of tRNAs, which functions as a near-UV photosensor. Also catalyzes the transfer of sulfur to the sulfur carrier protein ThiS, forming ThiS-thiocarboxylate. This is a step in the synthesis of thiazole, in the thiamine biosynthesis pathway. The sulfur is donated as persulfide by IscS. This chain is Probable tRNA sulfurtransferase, found in Methanosarcina acetivorans (strain ATCC 35395 / DSM 2834 / JCM 12185 / C2A).